The primary structure comprises 711 residues: Polyribonucleotide nucleotidyltransferase (711 aa).

Mg(2+) is bound by residues Asp489 and Asp495. Positions 556–615 (PRIHTIKISPDKIKDVIGKGGSVIRALTEETGTTIEIEDDGTVKIAATDGEKAKHAIRRI) constitute a KH domain. The region spanning 625–693 (GRIYNGKVTR…RQGRVRLSIK (69 aa)) is the S1 motif domain.

This sequence belongs to the polyribonucleotide nucleotidyltransferase family. As to quaternary structure, component of the RNA degradosome, which is a multiprotein complex involved in RNA processing and mRNA degradation. Requires Mg(2+) as cofactor.

Its subcellular location is the cytoplasm. The enzyme catalyses RNA(n+1) + phosphate = RNA(n) + a ribonucleoside 5'-diphosphate. Functionally, involved in mRNA degradation. Catalyzes the phosphorolysis of single-stranded polyribonucleotides processively in the 3'- to 5'-direction. The protein is Polyribonucleotide nucleotidyltransferase of Cronobacter sakazakii (strain ATCC BAA-894) (Enterobacter sakazakii).